The chain runs to 296 residues: Urease accessory protein UreD (296 aa).

This sequence belongs to the UreD family. In terms of assembly, ureD, UreF and UreG form a complex that acts as a GTP-hydrolysis-dependent molecular chaperone, activating the urease apoprotein by helping to assemble the nickel containing metallocenter of UreC. The UreE protein probably delivers the nickel.

The protein localises to the cytoplasm. Functionally, required for maturation of urease via the functional incorporation of the urease nickel metallocenter. The sequence is that of Urease accessory protein UreD from Synechococcus sp. (strain CC9311).